We begin with the raw amino-acid sequence, 150 residues long: Group IIC secretory phospholipase A2 (150 aa).

The N-terminal stretch at 1–20 (MKGIAVFLVFIFCWTTSTLS) is a signal peptide. 8 disulfide bridges follow: Cys46–Cys143, Cys48–Cys64, Cys63–Cys121, Cys69–Cys150, Cys70–Cys114, Cys79–Cys107, Cys97–Cys112, and Cys99–Cys105. Positions 47, 49, and 51 each coordinate Ca(2+). Residue His67 is part of the active site. Asp68 serves as a coordination point for Ca(2+). Asn92 carries N-linked (GlcNAc...) asparagine glycosylation. Residue Asp115 is part of the active site.

The protein belongs to the phospholipase A2 family. It depends on Ca(2+) as a cofactor.

It localises to the secreted. It carries out the reaction a 1,2-diacyl-sn-glycero-3-phosphocholine + H2O = a 1-acyl-sn-glycero-3-phosphocholine + a fatty acid + H(+). In terms of biological role, PA2 catalyzes the calcium-dependent hydrolysis of the 2-acyl groups in 3-sn-phosphoglycerides. The polypeptide is Group IIC secretory phospholipase A2 (Pla2g2c) (Rattus norvegicus (Rat)).